The primary structure comprises 179 residues: MTRQRIAIDMDEVLADTLGAVVKAVNERADLNIKMESLNGKKLKHMIPEHEGLVMDILKEPGFFRNLDVMPHAQEVVKQLNEHYDIYIATAAMDVPTSFHDKYEWLLEYFPFLDPQHFVFCGRKNIILADYLIDDNPKQLEIFEGKSIMFTASHNVNEHRFERVSGWRDVKNYFNSIEK.

Aspartate 9 serves as the catalytic Nucleophile. Aspartate 9, aspartate 11, and aspartate 135 together coordinate Mg(2+). The active-site Proton donor is aspartate 11.

This sequence belongs to the 5'(3')-deoxyribonucleotidase family. It depends on Mg(2+) as a cofactor.

In terms of biological role, dephosphorylates the 5' and 2'(3')-phosphates of deoxyribonucleotides. The sequence is that of Putative 5'(3')-deoxyribonucleotidase from Staphylococcus epidermidis (strain ATCC 35984 / DSM 28319 / BCRC 17069 / CCUG 31568 / BM 3577 / RP62A).